Consider the following 391-residue polypeptide: MSHRKFEAPRHGSLGFRPRRRTRHHRGRCRSFPKDDPSKKPHLTAFTGFKAGMTHILREVDRSGSRHNKKEVVEAVTVIECPPMTIVGVVGYIDTPRGLRALTTVWAKTIDNNTKKRFYKNWANSNKKAFTHHEKNFDQKAQDLLLKRIEKYCSVVRVIAHTNMSKLNLRQKKNHILEIQVNGGKVAEKVAFAKSLLEKEVKVDSIFAENEMLDVLGVTKGKGFAGVIKRFGVKHLQKKTHRGYRKVGCIGAWHPSRIRFTVPRAGQLGYHHRTETNKKVYRVGKGDDASNASTAGDVTDKAITPLGGFPHYGVVKNDFIMIKGCCVGPKKRVLTLRKSIIPQTHGAAKEIINLKFIDTSSKIGHGRFQTVEEKDKFFGRDRTKKVEAKSE.

Over residues 1 to 10 (MSHRKFEAPR) the composition is skewed to basic and acidic residues. Residues 1 to 41 (MSHRKFEAPRHGSLGFRPRRRTRHHRGRCRSFPKDDPSKKP) form a disordered region. The span at 17–31 (RPRRRTRHHRGRCRS) shows a compositional bias: basic residues.

It belongs to the universal ribosomal protein uL3 family.

It is found in the cytoplasm. In terms of biological role, the L3 protein is a component of the large subunit of cytoplasmic ribosomes. This chain is Large ribosomal subunit protein uL3 (RPL3), found in Tetrahymena thermophila.